A 367-amino-acid chain; its full sequence is DNA replication and repair protein RecF (367 aa).

Position 30–37 (30–37 (GANGSGKT)) interacts with ATP.

This sequence belongs to the RecF family.

It is found in the cytoplasm. Functionally, the RecF protein is involved in DNA metabolism; it is required for DNA replication and normal SOS inducibility. RecF binds preferentially to single-stranded, linear DNA. It also seems to bind ATP. The sequence is that of DNA replication and repair protein RecF from Pseudomonas putida (strain GB-1).